Consider the following 101-residue polypeptide: Protein Tat (101 aa).

Basic and acidic residues predominate over residues 1–12 (MEPVDPRLEPWK). The interval 1 to 24 (MEPVDPRLEPWKHPGSQPKTASNN) is disordered. The segment at 1-24 (MEPVDPRLEPWKHPGSQPKTASNN) is interaction with human CREBBP. The segment at 1–48 (MEPVDPRLEPWKHPGSQPKTASNNCYCKRCCLHCQVCFTKKGLGISYG) is transactivation. Residues 22 to 37 (SNNCYCKRCCLHCQVC) form a cysteine-rich region. Cys-25 and Cys-27 together coordinate Zn(2+). Lys-28 is modified (N6-acetyllysine; by host PCAF). Positions 30, 33, 34, and 37 each coordinate Zn(2+). Residues 38–48 (FTKKGLGISYG) form a core region. Residues 45–101 (ISYGRKKRRQRRRAPQDSKTHQVSLSKQPASQPRGDPTGPKESKKKVERETETDPED) form a disordered region. A compositionally biased stretch (basic residues) spans 48 to 57 (GRKKRRQRRR). The Nuclear localization signal, RNA-binding (TAR), and protein transduction signature appears at 49–57 (RKKRRQRRR). Positions 49–86 (RKKRRQRRRAPQDSKTHQVSLSKQPASQPRGDPTGPKE) are interaction with the host capping enzyme RNGTT. Residues Lys-50 and Lys-51 each carry the N6-acetyllysine; by host EP300 and GCN5L2 modification. Asymmetric dimethylarginine; by host PRMT6 occurs at positions 52 and 53. A compositionally biased stretch (polar residues) spans 65–75 (HQVSLSKQPAS). Residue Lys-71 forms a Glycyl lysine isopeptide (Lys-Gly) (interchain with G-Cter in ubiquitin) linkage. The Cell attachment site motif lies at 78–80 (RGD). Positions 83–101 (GPKESKKKVERETETDPED) are enriched in basic and acidic residues.

It belongs to the lentiviruses Tat family. Interacts with host CCNT1. Associates with the P-TEFb complex composed at least of Tat, P-TEFb (CDK9 and CCNT1), TAR RNA, RNA Pol II. Recruits the HATs CREBBP, TAF1/TFIID, EP300, PCAF and GCN5L2. Interacts with host KAT5/Tip60; this interaction targets the latter to degradation. Interacts with the host deacetylase SIRT1. Interacts with host capping enzyme RNGTT; this interaction stimulates RNGTT. Binds to host KDR, and to the host integrins ITGAV/ITGB3 and ITGA5/ITGB1. Interacts with host KPNB1/importin beta-1 without previous binding to KPNA1/importin alpha-1. Interacts with EIF2AK2. Interacts with host nucleosome assembly protein NAP1L1; this interaction may be required for the transport of Tat within the nucleus, since the two proteins interact at the nuclear rim. Interacts with host C1QBP/SF2P32; this interaction involves lysine-acetylated Tat. Interacts with the host chemokine receptors CCR2, CCR3 and CXCR4. Interacts with host DPP4/CD26; this interaction may trigger an anti-proliferative effect. Interacts with host LDLR. Interacts with the host extracellular matrix metalloproteinase MMP1. Interacts with host PRMT6; this interaction mediates Tat's methylation. Interacts with, and is ubiquitinated by MDM2/Hdm2. Interacts with host PSMC3 and HTATIP2. Interacts with STAB1; this interaction may overcome SATB1-mediated repression of IL2 and IL2RA (interleukin) in T cells by binding to the same domain than HDAC1. Interacts (when acetylated) with human CDK13, thereby increasing HIV-1 mRNA splicing and promoting the production of the doubly spliced HIV-1 protein Nef. Interacts with host TBP; this interaction modulates the activity of transcriptional pre-initiation complex. Interacts with host RELA. Interacts with host PLSCR1; this interaction negatively regulates Tat transactivation activity by altering its subcellular distribution. In terms of processing, asymmetrical arginine methylation by host PRMT6 seems to diminish the transactivation capacity of Tat and affects the interaction with host CCNT1. Acetylation by EP300, CREBBP, GCN5L2/GCN5 and PCAF regulates the transactivation activity of Tat. EP300-mediated acetylation of Lys-50 promotes dissociation of Tat from the TAR RNA through the competitive binding to PCAF's bromodomain. In addition, the non-acetylated Tat's N-terminus can also interact with PCAF. PCAF-mediated acetylation of Lys-28 enhances Tat's binding to CCNT1. Lys-50 is deacetylated by SIRT1. Post-translationally, polyubiquitination by host MDM2 does not target Tat to degradation, but activates its transactivation function and fosters interaction with CCNT1 and TAR RNA. In terms of processing, phosphorylated by EIF2AK2 on serine and threonine residues adjacent to the basic region important for TAR RNA binding and function. Phosphorylation of Tat by EIF2AK2 is dependent on the prior activation of EIF2AK2 by dsRNA.

Its subcellular location is the host nucleus. The protein localises to the host nucleolus. It is found in the host cytoplasm. It localises to the secreted. Functionally, transcriptional activator that increases RNA Pol II processivity, thereby increasing the level of full-length viral transcripts. Recognizes a hairpin structure at the 5'-LTR of the nascent viral mRNAs referred to as the transactivation responsive RNA element (TAR) and recruits the cyclin T1-CDK9 complex (P-TEFb complex) that will in turn hyperphosphorylate the RNA polymerase II to allow efficient elongation. The CDK9 component of P-TEFb and other Tat-activated kinases hyperphosphorylate the C-terminus of RNA Pol II that becomes stabilized and much more processive. Other factors such as HTATSF1/Tat-SF1, SUPT5H/SPT5, and HTATIP2 are also important for Tat's function. Besides its effect on RNA Pol II processivity, Tat induces chromatin remodeling of proviral genes by recruiting the histone acetyltransferases (HATs) CREBBP, EP300 and PCAF to the chromatin. This also contributes to the increase in proviral transcription rate, especially when the provirus integrates in transcriptionally silent region of the host genome. To ensure maximal activation of the LTR, Tat mediates nuclear translocation of NF-kappa-B by interacting with host RELA. Through its interaction with host TBP, Tat may also modulate transcription initiation. Tat can reactivate a latently infected cell by penetrating in it and transactivating its LTR promoter. In the cytoplasm, Tat is thought to act as a translational activator of HIV-1 mRNAs. In terms of biological role, extracellular circulating Tat can be endocytosed by surrounding uninfected cells via the binding to several surface receptors such as CD26, CXCR4, heparan sulfate proteoglycans (HSPG) or LDLR. Neurons are rarely infected, but they internalize Tat via their LDLR. Through its interaction with nuclear HATs, Tat is potentially able to control the acetylation-dependent cellular gene expression. Modulates the expression of many cellular genes involved in cell survival, proliferation or in coding for cytokines or cytokine receptors. Tat plays a role in T-cell and neurons apoptosis. Tat induced neurotoxicity and apoptosis probably contribute to neuroAIDS. Circulating Tat also acts as a chemokine-like and/or growth factor-like molecule that binds to specific receptors on the surface of the cells, affecting many cellular pathways. In the vascular system, Tat binds to ITGAV/ITGB3 and ITGA5/ITGB1 integrins dimers at the surface of endothelial cells and competes with bFGF for heparin-binding sites, leading to an excess of soluble bFGF. This Homo sapiens (Human) protein is Protein Tat.